The sequence spans 147 residues: Hemoglobin subunit beta-1 (147 aa).

Valine 2 is modified (N-acetylvaline). Residues 3–147 (HLTDAEKAAV…VASALAHKYH (145 aa)) enclose the Globin domain. Lysine 18 carries the post-translational modification N6-succinyllysine. Phosphoserine occurs at positions 45, 51, and 53. N6-succinyllysine is present on lysine 60. Positions 64 and 93 each coordinate heme b. Asymmetric dimethylarginine is present on arginine 105. Residue threonine 124 is modified to Phosphothreonine.

This sequence belongs to the globin family. Heterotetramer of two alpha chains and two beta chains. In terms of tissue distribution, red blood cells.

In terms of biological role, involved in oxygen transport from the lung to the various peripheral tissues. This chain is Hemoglobin subunit beta-1 (Hbb), found in Rattus norvegicus (Rat).